The following is a 99-amino-acid chain: Bombyxin A-1 homolog (99 aa).

The first 19 residues, 1–19 (MKTQVLFLVFALAAVMVSG), serve as a signal peptide directing secretion. 3 disulfides stabilise this stretch: Cys-27-Cys-86, Cys-39-Cys-99, and Cys-85-Cys-90. Positions 48 to 76 (TPYISPENEGYGWRWLEPQRARQLDGARG) are cleaved as a propeptide — c peptide like.

Belongs to the insulin family. Heterodimer of a B chain and an A chain linked by two disulfide bonds.

It localises to the secreted. Brain peptide responsible for activation of prothoracic glands to produce ecdysone in insects. The protein is Bombyxin A-1 homolog (SBXA1) of Samia cynthia (Ailanthus silkmoth).